The following is a 354-amino-acid chain: MSLSPKHTTPFSVSDILSPIEETYKKFSGAMDGAPPGLGAPLGAAAAYRAPPPGPSSQAATVAGMQPSHAMAGHNAAAAAAAAAAAAAAAATYHMPPGVSQFPHGAMGSYCNGGLGNMGELPAYTDGMRGGAATGWYGANPDPRYSSISRFMGPSAGVNVAGMGSLTGIADAAKSLGPLHAAAAAAAPRRKRRVLFSQAQVYELERRFKQQKYLSAPEREHLASMIHLTPTQVKIWFQNHRYKMKRQAKDKAAQQLQQEGGLGPPPPPPPSPRRVAVPVLVKDGKPCQNGASTPTPGQAGPQPPAPTPAPELEELSPSPPALHGPGGGLAALDAAAGEYSGGVLGANLLYGRTW.

Residues 189–248 (RRKRRVLFSQAQVYELERRFKQQKYLSAPEREHLASMIHLTPTQVKIWFQNHRYKMKRQA) constitute a DNA-binding region (homeobox). A disordered region spans residues 246-329 (RQAKDKAAQQ…PALHGPGGGL (84 aa)). The span at 263 to 272 (GPPPPPPPSP) shows a compositional bias: pro residues.

It belongs to the NK-2 homeobox family.

It is found in the nucleus. Functionally, probable transcription factor. This Homo sapiens (Human) protein is Homeobox protein Nkx-2.4 (NKX2-4).